Here is a 533-residue protein sequence, read N- to C-terminus: D-3-phosphoglycerate dehydrogenase (533 aa).

Ala2 bears the N-acetylalanine mark. At Ser14 the chain carries Phosphoserine. The residue at position 21 (Lys21) is an N6-acetyllysine; alternate. Lys21 participates in a covalent cross-link: Glycyl lysine isopeptide (Lys-Gly) (interchain with G-Cter in SUMO1); alternate. A Glycyl lysine isopeptide (Lys-Gly) (interchain with G-Cter in SUMO2); alternate cross-link involves residue Lys21. Lys58 bears the N6-acetyllysine mark. NAD(+) contacts are provided by residues Thr78, 155 to 156 (RI), Asp175, Thr207, 234 to 236 (CAR), and Asp260. Thr78 carries the phosphothreonine modification. Arg236 is a catalytic residue. Glu265 is a catalytic residue. His283 functions as the Proton donor in the catalytic mechanism. 283–286 (HLGA) is a binding site for NAD(+).

It belongs to the D-isomer specific 2-hydroxyacid dehydrogenase family. Homotetramer.

The catalysed reaction is (2R)-3-phosphoglycerate + NAD(+) = 3-phosphooxypyruvate + NADH + H(+). It catalyses the reaction (R)-2-hydroxyglutarate + NAD(+) = 2-oxoglutarate + NADH + H(+). The enzyme catalyses (S)-malate + NAD(+) = oxaloacetate + NADH + H(+). The protein operates within amino-acid biosynthesis; L-serine biosynthesis; L-serine from 3-phospho-D-glycerate: step 1/3. Catalyzes the reversible oxidation of 3-phospho-D-glycerate to 3-phosphonooxypyruvate, the first step of the phosphorylated L-serine biosynthesis pathway. Also catalyzes the reversible oxidation of 2-hydroxyglutarate to 2-oxoglutarate and the reversible oxidation of (S)-malate to oxaloacetate. This chain is D-3-phosphoglycerate dehydrogenase (PHGDH), found in Pan troglodytes (Chimpanzee).